The chain runs to 809 residues: LPS-assembly protein LptD (809 aa).

The N-terminal stretch at 1–22 is a signal peptide; sequence MRRALRLLPLPLSIAICLPAMA.

It belongs to the LptD family. As to quaternary structure, component of the lipopolysaccharide transport and assembly complex. Interacts with LptE and LptA.

The protein resides in the cell outer membrane. Together with LptE, is involved in the assembly of lipopolysaccharide (LPS) at the surface of the outer membrane. The chain is LPS-assembly protein LptD from Xanthomonas campestris pv. campestris (strain 8004).